A 181-amino-acid polypeptide reads, in one-letter code: MGLGRRAMVYLGLAEEDEDYLDDDDYDDGRAVGHDDRRAMHEPVPMDRTVRRIDAREEPVAMPRRPPVEPLRPAGPVPMRRVMPVEETHPYRITTLQPRSYNEARQIGEEFRDGTPVIMNLTDMDDVDAKRLVDFAAGLIFGLRGDIEKVTNKVFLLSPHNVEVTETDKRRIREGGFYNQS.

Residues 18 to 27 (EDYLDDDDYD) are compositionally biased toward acidic residues. The disordered stretch occupies residues 18–42 (EDYLDDDDYDDGRAVGHDDRRAMHE). Residues 28-42 (DGRAVGHDDRRAMHE) show a composition bias toward basic and acidic residues.

The protein belongs to the SepF family. Homodimer. Interacts with FtsZ.

It is found in the cytoplasm. Functionally, cell division protein that is part of the divisome complex and is recruited early to the Z-ring. Probably stimulates Z-ring formation, perhaps through the cross-linking of FtsZ protofilaments. Its function overlaps with FtsA. The protein is Cell division protein SepF of Frankia alni (strain DSM 45986 / CECT 9034 / ACN14a).